Here is a 277-residue protein sequence, read N- to C-terminus: Shikimate dehydrogenase (NADP(+)) (277 aa).

Residues 15–17 (SLS) and T62 each bind shikimate. K66 (proton acceptor) is an active-site residue. Shikimate is bound by residues N87 and D102. Residues 127 to 131 (GSGGA), 151 to 156 (NRTVDK), and I219 contribute to the NADP(+) site. Residue Y221 coordinates shikimate. G242 provides a ligand contact to NADP(+).

This sequence belongs to the shikimate dehydrogenase family. As to quaternary structure, homodimer.

The enzyme catalyses shikimate + NADP(+) = 3-dehydroshikimate + NADPH + H(+). It functions in the pathway metabolic intermediate biosynthesis; chorismate biosynthesis; chorismate from D-erythrose 4-phosphate and phosphoenolpyruvate: step 4/7. Involved in the biosynthesis of the chorismate, which leads to the biosynthesis of aromatic amino acids. Catalyzes the reversible NADPH linked reduction of 3-dehydroshikimate (DHSA) to yield shikimate (SA). The protein is Shikimate dehydrogenase (NADP(+)) of Bacillus cereus (strain B4264).